Here is a 309-residue protein sequence, read N- to C-terminus: Ornithine carbamoyltransferase (309 aa).

Carbamoyl phosphate-binding positions include 56–59 (STRT), glutamine 83, arginine 107, and 134–137 (HPCQ). Residues asparagine 165, aspartate 223, and 227 to 228 (SM) each bind L-ornithine. Residues 263 to 264 (CL) and arginine 291 contribute to the carbamoyl phosphate site.

It belongs to the aspartate/ornithine carbamoyltransferase superfamily. OTCase family.

Its subcellular location is the cytoplasm. It carries out the reaction carbamoyl phosphate + L-ornithine = L-citrulline + phosphate + H(+). It participates in amino-acid biosynthesis; L-arginine biosynthesis; L-arginine from L-ornithine and carbamoyl phosphate: step 1/3. Reversibly catalyzes the transfer of the carbamoyl group from carbamoyl phosphate (CP) to the N(epsilon) atom of ornithine (ORN) to produce L-citrulline. In Burkholderia lata (strain ATCC 17760 / DSM 23089 / LMG 22485 / NCIMB 9086 / R18194 / 383), this protein is Ornithine carbamoyltransferase.